Consider the following 220-residue polypeptide: UPF0319 protein YccT (220 aa).

The signal sequence occupies residues 1-20 (MKTGALATFLALCLPVTVFA).

This sequence belongs to the UPF0319 family.

This Salmonella enteritidis PT4 (strain P125109) protein is UPF0319 protein YccT.